Here is a 505-residue protein sequence, read N- to C-terminus: Holliday junction branch migration ATPase PINA (505 aa).

In terms of domain architecture, PINc spans 2–106 (NDLMLDKSAL…IVTADETQKK (105 aa)). The tract at residues 434-505 (PVNRGITMSN…NIKIKIKLSD (72 aa)) is KH domain. The required for maximum interaction with Hjc and Hjm stretch occupies residues 493–505 (KKNNIKIKIKLSD).

In terms of assembly, homohexamer; the central pore (25-31 Angstroms) is large enough to hold dsDNA. In PDB:5F4H two of the 6 subunits are in an ATP-binding competent conformation. Interacts with Holliday junction resolvase Hjc; in the presence of HJ DNA this interaction decreases branch migration but not Y-DNA unwinding. Interacts with helicase Hjm (hel308) which decreases the DNA helicase activity of Hjm. Ca(2+) is required as a cofactor.

It catalyses the reaction ATP + H2O = ADP + phosphate + H(+). In terms of biological role, promotes Holliday junction (HJ) branch migration and unwinds Y-shaped DNA (but not replication forks or dsDNA) in an ATP hydrolysis-dependent manner. Stimulates cleavage by HJ resolvase Hjc. Unwinds Y-shaped and 3'-flap DNA substrates. In the absence of other proteins stabilizes replication forks (prevents spontaneous unwinding); Hjc, Hjm (Hel308) and PINA coordinate HJ migration and cleavage of replication forks in a coordinated way. Inhibits the 5'-3' (but not 3'-5') helicase activity of helicase Hjm (Hel308) on overhang DNA. Probably acts as an ATP-dependent pump that pulls DNA through the hexamer. The sequence is that of Holliday junction branch migration ATPase PINA from Saccharolobus islandicus (strain REY15A) (Sulfolobus islandicus).